The primary structure comprises 347 residues: MNTPAQKKITIVDTTLRDGMSSVSHQFTPQNVADIARGLDKAGVGTIEVAHGIGLGASSIQYGFAAATDPDYVRAAVDAVENADIAALYVPGIATLAELQKAIDAGIKTVRVAVHCTEADCGQQPVEWAKEQGLTVMTFLMMSHKLDPEPLAEQAAKLDSYGADVVYVVDSAGAMVPQHAGDRVAALRQVITADIGFHAHNNLGVGIANALTAAENGATFIDGSLRGLGASAGNAQTEVLAAAFERAGWDTGVDLFPLIDTAEHIVAPLMKEPQIVDETALILGYAGVYSTFFHPTKRAAKKFGVPARDILMELGRRGVIGGQEDMIIDVASELAGRTYETPALAGS.

The 251-residue stretch at 9-259 folds into the Pyruvate carboxyltransferase domain; sequence ITIVDTTLRD…DTGVDLFPLI (251 aa). Residues 17 to 18, serine 171, and histidine 198 each bind substrate; that span reads RD. Aspartate 18 provides a ligand contact to Mn(2+). Mn(2+)-binding residues include histidine 198 and histidine 200. Tyrosine 289 serves as a coordination point for substrate.

It belongs to the 4-hydroxy-2-oxovalerate aldolase family.

The enzyme catalyses (S)-4-hydroxy-2-oxopentanoate = acetaldehyde + pyruvate. The chain is 4-hydroxy-2-oxovalerate aldolase 4 from Rhodococcus opacus (strain B4).